We begin with the raw amino-acid sequence, 473 residues long: Fumarate hydratase class II (473 aa).

Residues 104-106, 128-131, 138-140, and Thr186 each bind substrate; these read SGT, HPND, and SSN. The Proton donor/acceptor role is filled by His187. Residue Ser318 is part of the active site. Substrate is bound by residues Ser319 and 324–326; that span reads KVN.

This sequence belongs to the class-II fumarase/aspartase family. Fumarase subfamily. As to quaternary structure, homotetramer.

It is found in the cytoplasm. The catalysed reaction is (S)-malate = fumarate + H2O. The protein operates within carbohydrate metabolism; tricarboxylic acid cycle; (S)-malate from fumarate: step 1/1. Functionally, involved in the TCA cycle. Catalyzes the stereospecific interconversion of fumarate to L-malate. The chain is Fumarate hydratase class II from Corynebacterium glutamicum (strain ATCC 13032 / DSM 20300 / JCM 1318 / BCRC 11384 / CCUG 27702 / LMG 3730 / NBRC 12168 / NCIMB 10025 / NRRL B-2784 / 534).